We begin with the raw amino-acid sequence, 359 residues long: Molybdenum import ATP-binding protein ModC (359 aa).

Residues 1 to 229 form the ABC transporter domain; that stretch reads MLELNFSQQL…SALRPWLQRE (229 aa). 31–38 contributes to the ATP binding site; sequence GLSGAGKT. Residues 289–354 form the Mop domain; the sequence is SSSIRNILPV…IKSVSFNRQN (66 aa).

It belongs to the ABC transporter superfamily. Molybdate importer (TC 3.A.1.8) family. The complex is composed of two ATP-binding proteins (ModC), two transmembrane proteins (ModB) and a solute-binding protein (ModA).

It localises to the cell inner membrane. The enzyme catalyses molybdate(out) + ATP + H2O = molybdate(in) + ADP + phosphate + H(+). In terms of biological role, part of the ABC transporter complex ModABC involved in molybdenum import. Responsible for energy coupling to the transport system. In Yersinia pestis bv. Antiqua (strain Antiqua), this protein is Molybdenum import ATP-binding protein ModC.